The chain runs to 229 residues: 5'-methylthioadenosine/S-adenosylhomocysteine nucleosidase (229 aa).

Glu12 acts as the Proton acceptor in catalysis. Residues Gly78, Ile152, and Met173–Glu174 contribute to the substrate site. Catalysis depends on Asp197, which acts as the Proton donor.

This sequence belongs to the PNP/UDP phosphorylase family. MtnN subfamily.

The enzyme catalyses S-adenosyl-L-homocysteine + H2O = S-(5-deoxy-D-ribos-5-yl)-L-homocysteine + adenine. It carries out the reaction S-methyl-5'-thioadenosine + H2O = 5-(methylsulfanyl)-D-ribose + adenine. It catalyses the reaction 5'-deoxyadenosine + H2O = 5-deoxy-D-ribose + adenine. The protein operates within amino-acid biosynthesis; L-methionine biosynthesis via salvage pathway; S-methyl-5-thio-alpha-D-ribose 1-phosphate from S-methyl-5'-thioadenosine (hydrolase route): step 1/2. In terms of biological role, catalyzes the irreversible cleavage of the glycosidic bond in both 5'-methylthioadenosine (MTA) and S-adenosylhomocysteine (SAH/AdoHcy) to adenine and the corresponding thioribose, 5'-methylthioribose and S-ribosylhomocysteine, respectively. Also cleaves 5'-deoxyadenosine, a toxic by-product of radical S-adenosylmethionine (SAM) enzymes, into 5-deoxyribose and adenine. This chain is 5'-methylthioadenosine/S-adenosylhomocysteine nucleosidase, found in Haemophilus influenzae (strain PittEE).